Reading from the N-terminus, the 200-residue chain is GTP cyclohydrolase-2 (200 aa).

A GTP-binding site is contributed by 49–53 (RIHSE). Cysteine 54, cysteine 65, and cysteine 67 together coordinate Zn(2+). GTP-binding positions include glutamine 70, 92–94 (EGR), and threonine 114. Aspartate 126 (proton acceptor) is an active-site residue. The Nucleophile role is filled by arginine 128. Residues threonine 149 and lysine 154 each coordinate GTP.

Belongs to the GTP cyclohydrolase II family. It depends on Zn(2+) as a cofactor.

It catalyses the reaction GTP + 4 H2O = 2,5-diamino-6-hydroxy-4-(5-phosphoribosylamino)-pyrimidine + formate + 2 phosphate + 3 H(+). It participates in cofactor biosynthesis; riboflavin biosynthesis; 5-amino-6-(D-ribitylamino)uracil from GTP: step 1/4. In terms of biological role, catalyzes the conversion of GTP to 2,5-diamino-6-ribosylamino-4(3H)-pyrimidinone 5'-phosphate (DARP), formate and pyrophosphate. The sequence is that of GTP cyclohydrolase-2 from Saccharophagus degradans (strain 2-40 / ATCC 43961 / DSM 17024).